The sequence spans 2157 residues: Conidial yellow pigment biosynthesis polyketide synthase (2157 aa).

Positions 8-244 (YLFGDQTGDF…VMVPIHGPFH (237 aa)) are N-terminal acylcarrier protein transacylase domain (SAT). A Ketosynthase family 3 (KS3) domain is found at 376-807 (LSKIAIIGMS…GGNTALLLED (432 aa)). Catalysis depends on for beta-ketoacyl synthase activity residues C548, H683, and H725. Residues 912–1232 (FLFTGQGAQY…LSSLYLAGVD (321 aa)) are malonyl-CoA:ACP transacylase (MAT) domain. The For acyl/malonyl transferase activity role is filled by S1001. Residues 1290–1603 (TTSAQRVVES…RKILDIALPP (314 aa)) form a product template (PT) domain region. The N-terminal hotdog fold stretch occupies residues 1294–1425 (QRVVESRDDG…CEVKLFDCMA (132 aa)). The PKS/mFAS DH domain occupies 1294–1598 (QRVVESRDDG…FQALSRKILD (305 aa)). H1326 functions as the Proton acceptor; for dehydratase activity in the catalytic mechanism. The segment at 1453–1598 (AHRLRRGMVY…FQALSRKILD (146 aa)) is C-terminal hotdog fold. D1511 acts as the Proton donor; for dehydratase activity in catalysis. A disordered region spans residues 1607–1638 (SKAQTSPIQSSAPQKPIETAKPTSRPAPPVTM). A compositionally biased stretch (polar residues) spans 1608-1619 (KAQTSPIQSSAP). Positions 1645–1722 (SAGPSVVVRA…DFKRFVTQLS (78 aa)) constitute a Carrier 1 domain. Residue S1682 is modified to O-(pantetheine 4'-phosphoryl)serine. The disordered stretch occupies residues 1725-1760 (VASDSSSTDRESEYSFNGDSCSGLSSPASPGTVSPP). Over residues 1741-1759 (NGDSCSGLSSPASPGTVSP) the composition is skewed to polar residues. The Carrier 2 domain occupies 1767–1844 (IHENGTMKEI…QIETALDLKP (78 aa)). O-(pantetheine 4'-phosphoryl)serine is present on S1804. The segment at 1847–1888 (VPTAVPQSQPITLPQSQSTKQLSTRPTSSSDNHPPATSILLQ) is disordered. Over residues 1851 to 1878 (VPQSQPITLPQSQSTKQLSTRPTSSSDN) the composition is skewed to polar residues. Residues 1877 to 2149 (DNHPPATSIL…ELATFMKNAL (273 aa)) are claisen cyclase domain. S1967 functions as the For thioesterase activity in the catalytic mechanism.

It depends on pantetheine 4'-phosphate as a cofactor.

The catalysed reaction is 6 malonyl-CoA + acetyl-CoA + 6 H(+) = naphtopyrone YWA1 + 6 CO2 + 7 CoA + H2O. Its pathway is polyketide biosynthesis; heptaketide naphthopyrone YWA1 biosynthesis. Its function is as follows. Non-reducing polyketide synthase that condenses acetate units to form a heptaketide naphthopyrene YWA1, a yellow pigment found in mature asexual spores (conidia), via a polyketomethylene intermediate step. In Emericella nidulans (strain FGSC A4 / ATCC 38163 / CBS 112.46 / NRRL 194 / M139) (Aspergillus nidulans), this protein is Conidial yellow pigment biosynthesis polyketide synthase.